A 277-amino-acid polypeptide reads, in one-letter code: Phosphate import ATP-binding protein PstB 2 (277 aa).

The ABC transporter domain maps to 31–272 (IEVPGLNLFY…PAKKQTEDYI (242 aa)). An ATP-binding site is contributed by 63–70 (GPSGCGKS).

This sequence belongs to the ABC transporter superfamily. Phosphate importer (TC 3.A.1.7) family. As to quaternary structure, the complex is composed of two ATP-binding proteins (PstB), two transmembrane proteins (PstC and PstA) and a solute-binding protein (PstS).

The protein resides in the cell inner membrane. It carries out the reaction phosphate(out) + ATP + H2O = ADP + 2 phosphate(in) + H(+). Its function is as follows. Part of the ABC transporter complex PstSACB involved in phosphate import. Responsible for energy coupling to the transport system. This is Phosphate import ATP-binding protein PstB 2 from Pseudomonas savastanoi pv. phaseolicola (strain 1448A / Race 6) (Pseudomonas syringae pv. phaseolicola (strain 1448A / Race 6)).